We begin with the raw amino-acid sequence, 61 residues long: Small ribosomal subunit protein bS21 (61 aa).

Positions 36–61 (EHYESPSVKRKKKAEAARKRKYKYGR) are disordered. Positions 43–61 (VKRKKKAEAARKRKYKYGR) are enriched in basic residues.

This sequence belongs to the bacterial ribosomal protein bS21 family.

This is Small ribosomal subunit protein bS21 (rpsU) from Caldanaerobacter subterraneus subsp. tengcongensis (strain DSM 15242 / JCM 11007 / NBRC 100824 / MB4) (Thermoanaerobacter tengcongensis).